The sequence spans 139 residues: uncharacterized protein (139 aa).

The protein to S.typhimurium FliF.

May be involved in the assembly, structure, or function of the flagellum. May polymerize to form a filamentous structure that is part of the flagellum. This is an uncharacterized protein from Bacillus subtilis (strain 168).